A 370-amino-acid chain; its full sequence is Cell division protein DivIB (370 aa).

A disordered region spans residues 1 to 65 (MKKKKDEELT…SNKKGTKRIV (65 aa)). Residues 1–74 (MKKKKDEELT…VKEQRLSRQK (74 aa)) lie on the Cytoplasmic side of the membrane. 2 stretches are compositionally biased toward basic residues: residues 25 to 34 (SRFKRKRKAT) and 47 to 63 (RNNR…GTKR). The chain crosses the membrane as a helical span at residues 75 to 95 (LGILIGSTLIVIALFFGYFYS). The Extracellular portion of the chain corresponds to 96 to 370 (SISRVQKFSV…STVNTQQDID (275 aa)). A POTRA domain is found at 98 to 169 (SRVQKFSVSG…GKVKIKVKEN (72 aa)). The disordered stretch occupies residues 295 to 370 (SGWTDEAKAA…STVNTQQDID (76 aa)). Low complexity-rich tracts occupy residues 304-314 (ASESSKSAESS) and 327-342 (SESA…STET). A compositionally biased stretch (polar residues) spans 356-370 (SSNAESTVNTQQDID).

Belongs to the FtsQ/DivIB family. DivIB subfamily.

The protein resides in the cell membrane. Its function is as follows. Cell division protein that may be involved in stabilizing or promoting the assembly of the division complex. The polypeptide is Cell division protein DivIB (Pediococcus pentosaceus (strain ATCC 25745 / CCUG 21536 / LMG 10740 / 183-1w)).